Consider the following 132-residue polypeptide: Small ribosomal subunit protein uS8 (132 aa).

It belongs to the universal ribosomal protein uS8 family. As to quaternary structure, part of the 30S ribosomal subunit. Contacts proteins S5 and S12.

Functionally, one of the primary rRNA binding proteins, it binds directly to 16S rRNA central domain where it helps coordinate assembly of the platform of the 30S subunit. This chain is Small ribosomal subunit protein uS8, found in Ligilactobacillus salivarius (strain UCC118) (Lactobacillus salivarius).